The chain runs to 475 residues: Chromosomal replication initiator protein DnaA (475 aa).

A domain I, interacts with DnaA modulators region spans residues 1–73 (MSDTEQERWS…LSCWQAELPD (73 aa)). Residues 73-131 (DVHRIDLTVRSAMRCAAPVREAPATDARHPERSEGRNGVELKTVATAPASANHDALGGS) form a domain II region. Residues 132–354 (PLDPRLTFQS…GAINRLLAHS (223 aa)) form a domain III, AAA+ region region. Gly-179, Gly-181, Lys-182, and Thr-183 together coordinate ATP. The interval 355–475 (KLNAQPVTLE…VELLKRQLQE (121 aa)) is domain IV, binds dsDNA.

This sequence belongs to the DnaA family. As to quaternary structure, oligomerizes as a right-handed, spiral filament on DNA at oriC.

It is found in the cytoplasm. In terms of biological role, plays an essential role in the initiation and regulation of chromosomal replication. ATP-DnaA binds to the origin of replication (oriC) to initiate formation of the DNA replication initiation complex once per cell cycle. Binds the DnaA box (a 9 base pair repeat at the origin) and separates the double-stranded (ds)DNA. Forms a right-handed helical filament on oriC DNA; dsDNA binds to the exterior of the filament while single-stranded (ss)DNA is stabiized in the filament's interior. The ATP-DnaA-oriC complex binds and stabilizes one strand of the AT-rich DNA unwinding element (DUE), permitting loading of DNA polymerase. After initiation quickly degrades to an ADP-DnaA complex that is not apt for DNA replication. Binds acidic phospholipids. The polypeptide is Chromosomal replication initiator protein DnaA (Nitrobacter winogradskyi (strain ATCC 25391 / DSM 10237 / CIP 104748 / NCIMB 11846 / Nb-255)).